The chain runs to 702 residues: Polyribonucleotide nucleotidyltransferase (702 aa).

Mg(2+) is bound by residues aspartate 486 and aspartate 492. Residues 553–612 (PSMATIKIDPEKIRDVIGKGGATIRSITEQTGASIDLDDDGTVRIYAADKASSDAALLKI) form the KH domain. Positions 622–690 (DKLYKGKVVR…ARGRIKLSMK (69 aa)) constitute an S1 motif domain.

It belongs to the polyribonucleotide nucleotidyltransferase family. Component of the RNA degradosome, which is a multiprotein complex involved in RNA processing and mRNA degradation. The cofactor is Mg(2+).

The protein localises to the cytoplasm. It catalyses the reaction RNA(n+1) + phosphate = RNA(n) + a ribonucleoside 5'-diphosphate. Involved in mRNA degradation. Catalyzes the phosphorolysis of single-stranded polyribonucleotides processively in the 3'- to 5'-direction. This Marinomonas sp. (strain MWYL1) protein is Polyribonucleotide nucleotidyltransferase.